A 150-amino-acid chain; its full sequence is Transcriptional repressor NrdR (150 aa).

A zinc finger lies at 3–33 (CPFCGGESRVLESRPASDEEAVRRRRECLAC). Positions 48–138 (LIVVKKDGRR…VYREFKDLNE (91 aa)) constitute an ATP-cone domain.

This sequence belongs to the NrdR family. The cofactor is Zn(2+).

In terms of biological role, negatively regulates transcription of bacterial ribonucleotide reductase nrd genes and operons by binding to NrdR-boxes. The chain is Transcriptional repressor NrdR from Symbiobacterium thermophilum (strain DSM 24528 / JCM 14929 / IAM 14863 / T).